Consider the following 216-residue polypeptide: MQWTLVVPVKPLARAKSRLSDTAADAVRPGLALAFAQDTVAAALAATAVRGVVVVTDDPLAARELTALGARAVPEDPGGGPGDGLNAALRHGAALVRDVRPQSPVAALNADLPALRPGELTRVLGAAAAFPRAFLADAAGTGTTLLAAAPGHGLSPAFGPGSRTRHRRSGAVELDLTAVDSVRQDVDTGDDLRAALGLGVGPRTAAAAARLLIPGQ.

Positions 143, 159, and 162 each coordinate phosphoenolpyruvate.

Belongs to the CofC family.

The enzyme catalyses phosphoenolpyruvate + GTP + H(+) = enolpyruvoyl-2-diphospho-5'-guanosine + diphosphate. It functions in the pathway cofactor biosynthesis; coenzyme F420 biosynthesis. Its function is as follows. Guanylyltransferase that catalyzes the activation of phosphoenolpyruvate (PEP) as enolpyruvoyl-2-diphospho-5'-guanosine, via the condensation of PEP with GTP. It is involved in the biosynthesis of coenzyme F420, a hydride carrier cofactor. This Streptomyces scabiei (strain 87.22) protein is Phosphoenolpyruvate guanylyltransferase.